A 725-amino-acid polypeptide reads, in one-letter code: Antigen peptide transporter 1 (725 aa).

Residues 1–8 lie on the Cytoplasmic side of the membrane; it reads MAAHAWPT. The chain crosses the membrane as a helical span at residues 9–29; that stretch reads AALLLLLVDWLLLRPVLPGIF. At 30–38 the chain is on the lumenal side; sequence SLLVPEVPL. Residues 39 to 60 traverse the membrane as a helical segment; the sequence is LRVWAVGLSRWAILGLGVRGVL. Residues 61 to 67 lie on the Cytoplasmic side of the membrane; sequence GVTAGAR. Residues 68–88 form a helical membrane-spanning segment; sequence GWLAALQPLVAALGLALPGLA. Over 89 to 110 the chain is Lumenal; sequence SFRKLSAWGALREGDNAGLLHW. A helical transmembrane segment spans residues 111–131; that stretch reads NSRLDAFVLSYVAALPAAALW. Topologically, residues 132–163 are cytoplasmic; it reads HKLGGFWAPSGHKGAGDMLCRMLGFLDSKKGR. A helical transmembrane segment spans residues 164-184; it reads LHLVLVLLILSCLGEMAIPFF. Positions 164 to 447 constitute an ABC transmembrane type-1 domain; the sequence is LHLVLVLLIL…LLSIYPSMQK (284 aa). Topologically, residues 185 to 204 are lumenal; the sequence is TGRITDWILQDKTAPSFARN. A helical transmembrane segment spans residues 205–225; the sequence is MWLMCILTIASTVLEFAGDGI. At 226–275 the chain is on the cytoplasmic side; that stretch reads YNITMGHMHSRVHGEVFRAVLHQETGFFLKNPTGSITSRVTEDTSNVCES. The chain crosses the membrane as a helical span at residues 276-296; the sequence is ISDKLNLFLWYLGRGLCLLAF. At 297–305 the chain is on the lumenal side; sequence MIWGSFYLT. Residues 306-326 form a helical membrane-spanning segment; it reads VVTLLSLPLLFLLPRRLGKVY. The Cytoplasmic segment spans residues 327–395; the sequence is QSLAVKVQES…VTEVWTMSVS (69 aa). The tract at residues 352 to 397 is part of the peptide-binding site; the sequence is PTVRSFANEEGEAQKFRQKLEEMKPLNKKEALAYVTEVWTMSVSGM. A helical transmembrane segment spans residues 396–416; it reads GMLLKVGILYLGGQLVVRGAV. Over 417–420 the chain is Lumenal; that stretch reads SSGN. The helical transmembrane segment at 421-441 threads the bilayer; the sequence is LVSFVLYQLQFTRAVEVLLSI. The tract at residues 430–464 is part of the peptide-binding site; sequence QFTRAVEVLLSIYPSMQKSVGASEKIFEYLDRTPC. The Cytoplasmic segment spans residues 442-725; it reads YPSMQKSVGA…MVEALAAPSD (284 aa). In terms of domain architecture, ABC transporter spans 480 to 719; it reads VKFQDVSFAY…GGCYRSMVEA (240 aa). ATP-binding positions include 515–523, 618–624, and glutamine 678; these read GPNGSGKST and NQLSGGQ. Serine 522 serves as a coordination point for Mg(2+).

It belongs to the ABC transporter superfamily. ABCB family. MHC peptide exporter (TC 3.A.1.209) subfamily. Heterodimer of TAP1 and TAP2 (TAP1-TAP2). A component of the peptide loading complex (PLC), interacts via TAPBP with MHCI heterodimer; this interaction mediates peptide-MHCI assembly. Interacts with PSMB5 and PSMB8. It depends on Mg(2+) as a cofactor.

Its subcellular location is the endoplasmic reticulum membrane. It catalyses the reaction a peptide antigen(in) + ATP + H2O = a peptide antigen(out) + ADP + phosphate + H(+). Its function is as follows. ABC transporter associated with antigen processing. In complex with TAP2 mediates unidirectional translocation of peptide antigens from cytosol to endoplasmic reticulum (ER) for loading onto MHC class I (MHCI) molecules. Uses the chemical energy of ATP to export peptides against the concentration gradient. During the transport cycle alternates between 'inward-facing' state with peptide binding site facing the cytosol to 'outward-facing' state with peptide binding site facing the ER lumen. Peptide antigen binding to ATP-loaded TAP1-TAP2 induces a switch to hydrolysis-competent 'outward-facing' conformation ready for peptide loading onto nascent MHCI molecules. Subsequently ATP hydrolysis resets the transporter to the 'inward facing' state for a new cycle. As a component of the peptide loading complex (PLC), acts as a molecular scaffold essential for peptide-MHCI assembly and antigen presentation. The chain is Antigen peptide transporter 1 (Tap1) from Rattus norvegicus (Rat).